We begin with the raw amino-acid sequence, 267 residues long: Cysteine protease avirulence protein AvrPphB (267 aa).

The N-myristoyl glycine; by host moiety is linked to residue G63. Active-site residues include C98, H212, and D227.

Belongs to the peptidase C58 family. In infected plant cells, the 28 kDa product interacts with PBS1. Post-translationally, autocleaved. This function is essential for myristoylation in infected plant cell and for eliciting the plant hypersensitive response. In terms of processing, myristoylation of 28 kDa product in infected plant cells; it mediates the localization to membranes.

It localises to the secreted. The protein resides in the host membrane. Functionally, cysteine protease avirulence protein, which is essential during infection of plant cells from cultivar-specific of beans and Arabidopsis thaliana. The autocleavage of the protein is required for virulence function. May act by affecting the plant defense system. In plants lacking R3 or RPS5 resistance genes, it probably impairs the plant defense system and leads to the bacteria multiplication. In contrast, in plants containing the R3 or RPS5 protein, it is unable to induce disease symptoms, explaining its avirulence name. The 7 kDa product is required for the type-III translocation from Pseudomonas strains to the plant, but are partially dispensable for effector recognition following in planta expression. In infected plants, it acts by cleaving the PBS1 protein, which leads to resistance or disease, depending on the presence or absence of RPS5, respectively. Targets the Arabidopsis kinases PBS1, BIK1, PBL1, PBL2, PBL3, PBL5, PBL7, PBL9 and PBL11 for cleavage in vitro. Can block recognition of AvrB avirulence factor by plant cells by cleaving Arabidopsis RIPK kinase and suppressing Arabidopsis RPM1 activation. Cannot block AvrRpm1-induced activation of RPM1. The protein is Cysteine protease avirulence protein AvrPphB (avrPph3) of Pseudomonas savastanoi pv. phaseolicola (Pseudomonas syringae pv. phaseolicola).